Reading from the N-terminus, the 171-residue chain is Ribosome maturation factor RimP (171 aa).

The protein belongs to the RimP family.

It is found in the cytoplasm. Its function is as follows. Required for maturation of 30S ribosomal subunits. This is Ribosome maturation factor RimP from Oleidesulfovibrio alaskensis (strain ATCC BAA-1058 / DSM 17464 / G20) (Desulfovibrio alaskensis).